The chain runs to 148 residues: Lysozyme C (148 aa).

An N-terminal signal peptide occupies residues 1–18 (MKAVIILGLVLLSVTVQG). One can recognise a C-type lysozyme domain in the interval 19 to 148 (KIFERCELAR…VSQYVQGCGV (130 aa)). 4 disulfides stabilise this stretch: Cys-24/Cys-146, Cys-48/Cys-134, Cys-83/Cys-99, and Cys-95/Cys-113. Catalysis depends on residues Glu-53 and Asp-71.

The protein belongs to the glycosyl hydrolase 22 family. As to quaternary structure, monomer.

The protein resides in the secreted. The enzyme catalyses Hydrolysis of (1-&gt;4)-beta-linkages between N-acetylmuramic acid and N-acetyl-D-glucosamine residues in a peptidoglycan and between N-acetyl-D-glucosamine residues in chitodextrins.. Lysozymes have primarily a bacteriolytic function; those in tissues and body fluids are associated with the monocyte-macrophage system and enhance the activity of immunoagents. The polypeptide is Lysozyme C (LYZ) (Miopithecus talapoin (Angolan talapoin)).